Consider the following 225-residue polypeptide: Uracil-DNA glycosylase (225 aa).

Asp-65 acts as the Proton acceptor in catalysis.

Belongs to the uracil-DNA glycosylase (UDG) superfamily. UNG family.

It localises to the cytoplasm. It catalyses the reaction Hydrolyzes single-stranded DNA or mismatched double-stranded DNA and polynucleotides, releasing free uracil.. Its function is as follows. Excises uracil residues from the DNA which can arise as a result of misincorporation of dUMP residues by DNA polymerase or due to deamination of cytosine. This chain is Uracil-DNA glycosylase, found in Bacillus cereus (strain G9842).